Here is a 77-residue protein sequence, read N- to C-terminus: Large ribosomal subunit protein bL28 (77 aa).

Positions 1 to 20 (MSRVCQVTGKGPVTGNNISH) are disordered.

Belongs to the bacterial ribosomal protein bL28 family.

The chain is Large ribosomal subunit protein bL28 from Pseudomonas syringae pv. tomato (strain ATCC BAA-871 / DC3000).